The sequence spans 731 residues: 1,4-alpha-glucan branching enzyme GlgB (731 aa).

D409 serves as the catalytic Nucleophile. E462 serves as the catalytic Proton donor.

This sequence belongs to the glycosyl hydrolase 13 family. GlgB subfamily. In terms of assembly, monomer.

The enzyme catalyses Transfers a segment of a (1-&gt;4)-alpha-D-glucan chain to a primary hydroxy group in a similar glucan chain.. It functions in the pathway glycan biosynthesis; glycogen biosynthesis. Functionally, catalyzes the formation of the alpha-1,6-glucosidic linkages in glycogen by scission of a 1,4-alpha-linked oligosaccharide from growing alpha-1,4-glucan chains and the subsequent attachment of the oligosaccharide to the alpha-1,6 position. The sequence is that of 1,4-alpha-glucan branching enzyme GlgB from Roseobacter denitrificans (strain ATCC 33942 / OCh 114) (Erythrobacter sp. (strain OCh 114)).